A 664-amino-acid polypeptide reads, in one-letter code: Serine/threonine-protein kinase PrkC (664 aa).

Residues 1–348 (MIGKIINERY…PKPKKKSTRK (348 aa)) lie on the Cytoplasmic side of the membrane. One can recognise a Protein kinase domain in the interval 10-271 (YKIVDKLGGG…EMKDDLSSVL (262 aa)). ATP-binding positions include 16 to 24 (LGGGGMSTV) and K39. The active-site Proton acceptor is the D133. 3 positions are modified to phosphothreonine; by autocatalysis: T161, T164, and T166. A helical membrane pass occupies residues 349-369 (IVLLSLIFSLLMIALVSFVAM). Residues 370 to 664 (AMFGNKYEET…AEKEVSYDDV (295 aa)) are Extracellular-facing. 3 consecutive PASTA domains span residues 373–440 (GNKY…VISK), 441–509 (GPEK…YESL), and 510–575 (GIKQ…VVSK). A disordered region spans residues 541 to 565 (KEEYSDDIDEGDVISQSPKGKSVDE). Positions 554-565 (ISQSPKGKSVDE) are enriched in polar residues.

This sequence belongs to the protein kinase superfamily. Ser/Thr protein kinase family. In terms of assembly, homodimer.

Its subcellular location is the spore membrane. The enzyme catalyses L-seryl-[protein] + ATP = O-phospho-L-seryl-[protein] + ADP + H(+). It catalyses the reaction L-threonyl-[protein] + ATP = O-phospho-L-threonyl-[protein] + ADP + H(+). In terms of biological role, probable protein kinase that is responsible for triggering spore germination in response to muropeptides, signaling bacteria to exit dormancy. PrkC is thus a germination receptor that binds peptidoglycan fragments containing either m-Dpm (meso-diaminopimelate) or L-lys, which act as spore germinants. Probably autophosphorylates and phosphorylates FusA (EF-G, elongation factor G); the latter modification is likely necessary for germination in response to peptidoglycan. The protein is Serine/threonine-protein kinase PrkC (prkC) of Staphylococcus aureus (strain Newman).